Consider the following 469-residue polypeptide: Histone chaperone rtt-106 (469 aa).

Disordered regions lie at residues 54–73 (EEPA…PNGA) and 364–469 (MAEQ…EGEE). Basic and acidic residues-rich tracts occupy residues 364-379 (MAEQ…ENAK) and 402-415 (ELER…QRLQ). 2 stretches are compositionally biased toward acidic residues: residues 416–433 (DEED…EGES) and 440–469 (SEEE…EGEE).

The protein belongs to the RTT106 family. In terms of assembly, interacts with histones H3 and H4.

The protein resides in the nucleus. Its subcellular location is the chromosome. Its function is as follows. Histones H3 and H4 chaperone involved in the nucleosome formation and heterochromatin silencing. Required for the deposition of H3K56ac-carrying H3-H4 complex onto newly-replicated DNA. Plays a role in the transcriptional regulation of the cell-cycle dependent histone genes by creating a repressive structure at the core histone gene promoter. This is Histone chaperone rtt-106 (rtt-106) from Neurospora crassa (strain ATCC 24698 / 74-OR23-1A / CBS 708.71 / DSM 1257 / FGSC 987).